We begin with the raw amino-acid sequence, 218 residues long: Ras-related protein Rab-4A (218 aa).

G23, T24, G25, K26, S27, C28, S42, H44, and T45 together coordinate GTP. S27 contacts Mg(2+). The Switch 1 signature appears at 44-49 (HTIGVE). T45 and D68 together coordinate Mg(2+). Positions 70–79 (AGQERFRSVT) match the Switch 2 motif. G71 provides a ligand contact to GTP. Q72 is modified (5-glutamyl serotonin). GTP contacts are provided by N126, K127, D129, A157, and L158. Position 190 is a phosphoserine (S190). Position 204 is a phosphoserine; by CDK1 (S204). Residues C216 and C218 are each lipidated (S-geranylgeranyl cysteine). C218 bears the Cysteine methyl ester mark.

The protein belongs to the small GTPase superfamily. Rab family. In terms of assembly, interacts with SGSM1, SGSM2 and SGSM3. Interacts with RAB11FIP1, RABEP1, ZFYVE20 and RUFY1. Interacts (membrane-bound form) with NDRG1; the interaction involves NDRG1 in vesicular recycling of E-cadherin. Interacts (in GTP-bound form) with GRIPAP1 (via N-terminus). Interacts with RABEP1 and RBSN. Does not interact with HPS4. Interacts with RABEP2; this interaction may mediate VEGFR2 cell surface expression. The cofactor is Mg(2+). Serotonylation of Gln-72 by TGM2 during activation and aggregation of platelets leads to constitutive activation of GTPase activity. In terms of processing, phosphorylated by CDK1 kinase during mitosis.

The protein localises to the membrane. Its subcellular location is the cytoplasm. The protein resides in the early endosome membrane. It localises to the recycling endosome membrane. It carries out the reaction GTP + H2O = GDP + phosphate + H(+). Regulated by guanine nucleotide exchange factors (GEFs) which promote the exchange of bound GDP for free GTP. Regulated by GTPase activating proteins (GAPs) which increase the GTP hydrolysis activity. Inhibited by GDP dissociation inhibitors (GDIs). Its function is as follows. The small GTPases Rab are key regulators of intracellular membrane trafficking, from the formation of transport vesicles to their fusion with membranes. Rabs cycle between an inactive GDP-bound form and an active GTP-bound form that is able to recruit to membranes different sets of downstream effectors directly responsible for vesicle formation, movement, tethering and fusion. RAB4A is involved in protein transport. Also plays a role in vesicular traffic. Mediates VEGFR2 endosomal trafficking to enhance VEGFR2 signaling. Acts as a regulator of platelet alpha-granule release during activation and aggregation of platelets. This is Ras-related protein Rab-4A from Rattus norvegicus (Rat).